A 1610-amino-acid chain; its full sequence is Adenylate cyclase type 10 (1610 aa).

2 Guanylate cyclase domains span residues Val-42 to Gln-179 and Thr-293 to Met-418. Residues Asp-47 and Ile-48 each coordinate Mg(2+). An ATP-binding site is contributed by Asp-47–Thr-52. Lys-95 is a hydrogencarbonate binding site. Residue Asp-99 participates in Mg(2+) binding. Asp-99 and Lys-144 together coordinate ATP. The hydrogencarbonate site is built by Val-167, Arg-176, and Met-337. ATP contacts are provided by residues Val-406 and Asn-412–Arg-416.

Belongs to the adenylyl cyclase class-4/guanylyl cyclase family. Mg(2+) serves as cofactor. The cofactor is Mn(2+).

The protein localises to the cell membrane. Its subcellular location is the cytoplasm. It is found in the cytoskeleton. It localises to the perinuclear region. The protein resides in the nucleus. The protein localises to the cell projection. Its subcellular location is the cilium. The catalysed reaction is ATP = 3',5'-cyclic AMP + diphosphate. Activated by manganese or magnesium ions. In the presence of magnesium ions, the enzyme is activated by bicarbonate. Calcium mildly increases the enzyme activity, also in the presence of magnesium ions. In terms of biological role, catalyzes the formation of the signaling molecule cAMP. May function as sensor that mediates responses to changes in cellular bicarbonate and CO(2) levels. Has a critical role in mammalian spermatogenesis by producing the cAMP which regulates cAMP-responsive nuclear factors indispensable for sperm maturation in the epididymis. Induces capacitation, the maturational process that sperm undergo prior to fertilization. Involved in ciliary beat regulation. The polypeptide is Adenylate cyclase type 10 (ADCY10) (Oryctolagus cuniculus (Rabbit)).